A 2352-amino-acid polypeptide reads, in one-letter code: Cell wall alpha-1,3-glucan synthase mok12 (2352 aa).

The segment at 1786–1813 is disordered; that stretch reads SNDFGIREVPLSDANQSSQADSTSIDRY. Positions 1798 to 1813 are enriched in polar residues; the sequence is DANQSSQADSTSIDRY.

It belongs to the glycosyltransferase group 1 family.

The catalysed reaction is [(1-&gt;3)-alpha-D-glucosyl](n) + UDP-alpha-D-glucose = [(1-&gt;3)-alpha-D-glucosyl](n+1) + UDP + H(+). The polypeptide is Cell wall alpha-1,3-glucan synthase mok12 (mok12) (Schizosaccharomyces pombe (strain 972 / ATCC 24843) (Fission yeast)).